Consider the following 87-residue polypeptide: Small ribosomal subunit protein bS20 (87 aa).

The segment at 1-25 is disordered; that stretch reads MANIKSAKKRAVQSEKHRLHNASRR.

It belongs to the bacterial ribosomal protein bS20 family.

Functionally, binds directly to 16S ribosomal RNA. The chain is Small ribosomal subunit protein bS20 from Baumannia cicadellinicola subsp. Homalodisca coagulata.